The sequence spans 171 residues: Adenine phosphoribosyltransferase (171 aa).

The protein belongs to the purine/pyrimidine phosphoribosyltransferase family. Homodimer.

The protein resides in the cytoplasm. The catalysed reaction is AMP + diphosphate = 5-phospho-alpha-D-ribose 1-diphosphate + adenine. It participates in purine metabolism; AMP biosynthesis via salvage pathway; AMP from adenine: step 1/1. In terms of biological role, catalyzes a salvage reaction resulting in the formation of AMP, that is energically less costly than de novo synthesis. This is Adenine phosphoribosyltransferase from Geobacter metallireducens (strain ATCC 53774 / DSM 7210 / GS-15).